Consider the following 306-residue polypeptide: Methionyl-tRNA formyltransferase (306 aa).

108–111 provides a ligand contact to (6S)-5,6,7,8-tetrahydrofolate; that stretch reads SLLP.

It belongs to the Fmt family.

It carries out the reaction L-methionyl-tRNA(fMet) + (6R)-10-formyltetrahydrofolate = N-formyl-L-methionyl-tRNA(fMet) + (6S)-5,6,7,8-tetrahydrofolate + H(+). Its function is as follows. Attaches a formyl group to the free amino group of methionyl-tRNA(fMet). The formyl group appears to play a dual role in the initiator identity of N-formylmethionyl-tRNA by promoting its recognition by IF2 and preventing the misappropriation of this tRNA by the elongation apparatus. This chain is Methionyl-tRNA formyltransferase, found in Arthrobacter sp. (strain FB24).